We begin with the raw amino-acid sequence, 244 residues long: MKIDLNADLGEGCASDAELLTLVSSANIACGFHAGDAQIMQACVREAIKNGVAIGAHPSFPDRENFGRSAMQLPPETVYAQTLYQIGALATIARAQGGVMRHVKPHGMLYNQAAKEAQLADAIARAVYACDPALILVGLAGSELIRAGKQYGLTTREEVFADRGYQADGSLVPRSQRGALIENEEQALAQTLEMVQHGRVKSITGEWATVTAQTVCLHGDGEHALAFARRLRSTFAEKEIVVAA.

The protein belongs to the LamB/PxpA family. Forms a complex composed of PxpA, PxpB and PxpC.

The enzyme catalyses 5-oxo-L-proline + ATP + 2 H2O = L-glutamate + ADP + phosphate + H(+). Functionally, catalyzes the cleavage of 5-oxoproline to form L-glutamate coupled to the hydrolysis of ATP to ADP and inorganic phosphate. The sequence is that of 5-oxoprolinase subunit A from Shigella sonnei (strain Ss046).